We begin with the raw amino-acid sequence, 255 residues long: Small ribosomal subunit protein uS2 (255 aa).

Positions 230–255 are disordered; it reads QSSSGRDLGASSEVPVEPALEEAAEG.

This sequence belongs to the universal ribosomal protein uS2 family.

In Rhizobium leguminosarum bv. trifolii (strain WSM2304), this protein is Small ribosomal subunit protein uS2.